Reading from the N-terminus, the 316-residue chain is Erythritol catabolism regulatory protein EryD (316 aa).

The H-T-H motif DNA-binding region spans 23-42 (QSAVAKRLGLPSVKAHRLIA).

This sequence belongs to the SorC transcriptional regulatory family.

Erythritol may act as an inducer, probably by binding to EryD and inhibiting its repressor activity. Represses the expression of the eryABCD operon, which is involved in erythritol catabolism. The protein is Erythritol catabolism regulatory protein EryD of Brucella abortus (strain 2308).